We begin with the raw amino-acid sequence, 330 residues long: MSDAPIATSSEVTQSPADYDPTKKQKSAEKTARIPIKIVPAEKLKKPDWIRVKAATGNSRFYEIKDILRANNLVTVCEEASCPNIGECFGKGTATFMIMGDKCTRRCPFCDVGHGRPDPLDVNEPGNLARTIAQLKLNYVVITSVDRDDLRDGGAQHYVDCISQTRELSPNTRIEVLVPDFRGRLDRALDILQACPPDVMNHNMETVPRLYKQARPGADYAHSLKLLQDFKRRNPNVPTKSGLMVGLGETDEEILDVMRDMRAHDIDMLTIGQYLAPSNHHLPVTRYVHPDTFKMFEEEAYKMGFTHAAVGAMVRSSYHADQQAHQAGFA.

Residues 1 to 31 (MSDAPIATSSEVTQSPADYDPTKKQKSAEKT) are disordered. A compositionally biased stretch (polar residues) spans 7-16 (ATSSEVTQSP). Residues 20-31 (DPTKKQKSAEKT) show a composition bias toward basic and acidic residues. Cysteine 77, cysteine 82, cysteine 88, cysteine 103, cysteine 107, cysteine 110, and serine 317 together coordinate [4Fe-4S] cluster. The 219-residue stretch at 88–306 (CFGKGTATFM…EEEAYKMGFT (219 aa)) folds into the Radical SAM core domain.

It belongs to the radical SAM superfamily. Lipoyl synthase family. It depends on [4Fe-4S] cluster as a cofactor.

It is found in the cytoplasm. The catalysed reaction is [[Fe-S] cluster scaffold protein carrying a second [4Fe-4S](2+) cluster] + N(6)-octanoyl-L-lysyl-[protein] + 2 oxidized [2Fe-2S]-[ferredoxin] + 2 S-adenosyl-L-methionine + 4 H(+) = [[Fe-S] cluster scaffold protein] + N(6)-[(R)-dihydrolipoyl]-L-lysyl-[protein] + 4 Fe(3+) + 2 hydrogen sulfide + 2 5'-deoxyadenosine + 2 L-methionine + 2 reduced [2Fe-2S]-[ferredoxin]. Its pathway is protein modification; protein lipoylation via endogenous pathway; protein N(6)-(lipoyl)lysine from octanoyl-[acyl-carrier-protein]: step 2/2. Catalyzes the radical-mediated insertion of two sulfur atoms into the C-6 and C-8 positions of the octanoyl moiety bound to the lipoyl domains of lipoate-dependent enzymes, thereby converting the octanoylated domains into lipoylated derivatives. The sequence is that of Lipoyl synthase from Cupriavidus metallidurans (strain ATCC 43123 / DSM 2839 / NBRC 102507 / CH34) (Ralstonia metallidurans).